The sequence spans 419 residues: Protein FAM217A (419 aa).

Disordered regions lie at residues 1-60 (MGRK…LENP), 96-119 (KGST…DLSE), 236-299 (SSSK…SRAL), and 317-382 (KNSK…RTKK). A compositionally biased stretch (low complexity) spans 7–19 (ESCSSSLHVSSIS). Residues 236-251 (SSSKAIATKAKAPKIP) show a composition bias toward low complexity. Polar residues-rich tracts occupy residues 252-261 (ETSTLQTSGV) and 271-281 (NSGSGKPEQNV). 2 stretches are compositionally biased toward low complexity: residues 282–296 (SKWS…KSNS) and 334–345 (PTTTTQATQPMA).

Belongs to the FAM217 family.

This Mus musculus (Mouse) protein is Protein FAM217A (Fam217a).